The sequence spans 310 residues: Ribosomal protein uL3 glutamine methyltransferase (310 aa).

Belongs to the protein N5-glutamine methyltransferase family. PrmB subfamily.

It carries out the reaction L-glutaminyl-[ribosomal protein uL3] + S-adenosyl-L-methionine = N(5)-methyl-L-glutaminyl-[ribosomal protein uL3] + S-adenosyl-L-homocysteine + H(+). Functionally, methylates large ribosomal subunit protein uL3 on a specific glutamine residue. The protein is Ribosomal protein uL3 glutamine methyltransferase of Aliivibrio fischeri (strain ATCC 700601 / ES114) (Vibrio fischeri).